A 401-amino-acid chain; its full sequence is Glutamyl-tRNA reductase (401 aa).

Residues 45–48 (TCNR), serine 101, 106–108 (EDQ), and glutamine 112 each bind substrate. Cysteine 46 (nucleophile) is an active-site residue. 177 to 182 (GYGEVG) contributes to the NADP(+) binding site.

This sequence belongs to the glutamyl-tRNA reductase family. In terms of assembly, homodimer.

It catalyses the reaction (S)-4-amino-5-oxopentanoate + tRNA(Glu) + NADP(+) = L-glutamyl-tRNA(Glu) + NADPH + H(+). The protein operates within porphyrin-containing compound metabolism; protoporphyrin-IX biosynthesis; 5-aminolevulinate from L-glutamyl-tRNA(Glu): step 1/2. In terms of biological role, catalyzes the NADPH-dependent reduction of glutamyl-tRNA(Glu) to glutamate 1-semialdehyde (GSA). The sequence is that of Glutamyl-tRNA reductase from Clostridium beijerinckii (strain ATCC 51743 / NCIMB 8052) (Clostridium acetobutylicum).